A 574-amino-acid chain; its full sequence is DNA mismatch repair protein MutL (574 aa).

The protein belongs to the DNA mismatch repair MutL/HexB family.

Functionally, this protein is involved in the repair of mismatches in DNA. It is required for dam-dependent methyl-directed DNA mismatch repair. May act as a 'molecular matchmaker', a protein that promotes the formation of a stable complex between two or more DNA-binding proteins in an ATP-dependent manner without itself being part of a final effector complex. The sequence is that of DNA mismatch repair protein MutL from Coxiella burnetii (strain Dugway 5J108-111).